We begin with the raw amino-acid sequence, 200 residues long: Pyridoxal 5'-phosphate synthase subunit PdxT (200 aa).

52–54 (GES) provides a ligand contact to L-glutamine. C84 acts as the Nucleophile in catalysis. Residues R116 and 145 to 146 (IR) contribute to the L-glutamine site. Catalysis depends on charge relay system residues H181 and E183.

It belongs to the glutaminase PdxT/SNO family. In terms of assembly, in the presence of PdxS, forms a dodecamer of heterodimers. Only shows activity in the heterodimer.

The catalysed reaction is aldehydo-D-ribose 5-phosphate + D-glyceraldehyde 3-phosphate + L-glutamine = pyridoxal 5'-phosphate + L-glutamate + phosphate + 3 H2O + H(+). It catalyses the reaction L-glutamine + H2O = L-glutamate + NH4(+). It functions in the pathway cofactor biosynthesis; pyridoxal 5'-phosphate biosynthesis. Catalyzes the hydrolysis of glutamine to glutamate and ammonia as part of the biosynthesis of pyridoxal 5'-phosphate. The resulting ammonia molecule is channeled to the active site of PdxS. The chain is Pyridoxal 5'-phosphate synthase subunit PdxT from Saccharolobus islandicus (strain Y.G.57.14 / Yellowstone #1) (Sulfolobus islandicus).